We begin with the raw amino-acid sequence, 128 residues long: Head peptide (128 aa).

Residues 1-22 (MWKFASIVVLVVCLAWAVYCED) form the signal peptide. Gln-23 carries the pyrrolidone carboxylic acid modification. Residue Pro-26 is modified to Hydroxyproline; partial. The tract at residues 27 to 128 (SLKTRFGRSA…GRANKKRAAN (102 aa)) is disordered. Residue Phe-32 is modified to Phenylalanine amide. Positions 35–55 (SADEPESDNYVSNDIMEKRSA) are excised as a propeptide. Gln-56 is modified (pyrrolidone carboxylic acid). Pro-59 carries the post-translational modification Hydroxyproline; partial. At Phe-65 the chain carries Phenylalanine amide. Residues 66 to 78 (GRSEGAEVMEKRS) are compositionally biased toward basic and acidic residues. The propeptide occupies 68 to 79 (SEGAEVMEKRSA). At Gln-80 the chain carries Pyrrolidone carboxylic acid. At Pro-83 the chain carries Hydroxyproline; partial. Position 89 is a phenylalanine amide (Phe-89). Residues 92 to 128 (SVANPESDGYMRKRSAESEPFVTRIRHGRANKKRAAN) constitute a propeptide that is removed on maturation. Residues 115 to 128 (RIRHGRANKKRAAN) show a composition bias toward basic residues.

This sequence belongs to the NPY family. In terms of tissue distribution, expressed in the brain, terminal ganglion, and midgut of adults: numerous neurosecretory cells and midgut endocrine cells. Expression is dynamic depending on reproductive cycle.

The protein resides in the secreted. In terms of biological role, has a role in inhibiting host-seeking behavior during a reproductive cycle. In Aedes aegypti (Yellowfever mosquito), this protein is Head peptide.